The primary structure comprises 712 residues: BTB/POZ domain-containing protein 18 (712 aa).

The BTB domain occupies C34–Q102. Disordered stretches follow at residues V157–L176, R212–V355, and E374–S410. A compositionally biased stretch (polar residues) spans Q218–S228. Residues Q229–T238 show a composition bias toward basic and acidic residues. Over residues S277–S288 the composition is skewed to low complexity. The span at V303–K313 shows a compositional bias: basic and acidic residues. The segment covering P396–S410 has biased composition (polar residues). Residues S420, S671, and S672 each carry the phosphoserine modification. Disordered regions lie at residues K653 to E676 and T691 to T712. Over residues S702 to T712 the composition is skewed to acidic residues.

Its subcellular location is the nucleus. In terms of biological role, specifically required during spermatogenesis to promote expression of piRNA precursors. The piRNA metabolic process mediates the repression of transposable elements during meiosis by forming complexes composed of piRNAs and Piwi proteins and governs the methylation and subsequent repression of transposons, which is essential for the germline integrity. Acts by facilitating transcription elongation at piRNA loci during pachytene. This chain is BTB/POZ domain-containing protein 18, found in Homo sapiens (Human).